The chain runs to 88 residues: HssA/B-like protein 6 (88 aa).

The tract at residues 1-22 is disordered; the sequence is MSILSALTSISNPMKSSNSNVA.

Belongs to the hssA/B family.

The protein is HssA/B-like protein 6 (hssl6) of Dictyostelium discoideum (Social amoeba).